Reading from the N-terminus, the 166-residue chain is UPF0336 protein ML1908 (166 aa).

It belongs to the UPF0336 family.

This chain is UPF0336 protein ML1908, found in Mycobacterium leprae (strain TN).